The sequence spans 178 residues: Cytochrome b6-f complex iron-sulfur subunit (178 aa).

The helical transmembrane segment at 20 to 42 (LLTFGTVTGVALGALYPVAQYFT) threads the bilayer. The Rieske domain maps to 71–161 (THPVGDRSLV…VSIEDDQVLV (91 aa)). [2Fe-2S] cluster-binding residues include C107, H109, C125, and H128. C112 and C127 are oxidised to a cystine.

Belongs to the Rieske iron-sulfur protein family. In terms of assembly, the 4 large subunits of the cytochrome b6-f complex are cytochrome b6, subunit IV (17 kDa polypeptide, PetD), cytochrome f and the Rieske protein, while the 4 small subunits are PetG, PetL, PetM and PetN. The complex functions as a dimer. [2Fe-2S] cluster is required as a cofactor.

The protein localises to the cellular thylakoid membrane. It carries out the reaction 2 oxidized [plastocyanin] + a plastoquinol + 2 H(+)(in) = 2 reduced [plastocyanin] + a plastoquinone + 4 H(+)(out). Functionally, component of the cytochrome b6-f complex, which mediates electron transfer between photosystem II (PSII) and photosystem I (PSI), cyclic electron flow around PSI, and state transitions. The chain is Cytochrome b6-f complex iron-sulfur subunit from Prochlorococcus marinus (strain NATL1A).